Here is a 495-residue protein sequence, read N- to C-terminus: UDP-N-acetylmuramoyl-L-alanyl-D-glutamate--2,6-diaminopimelate ligase (495 aa).

UDP-N-acetyl-alpha-D-muramoyl-L-alanyl-D-glutamate contacts are provided by residues Leu-27, Ser-29, and 44-46 (HQA). ATP is bound at residue 116-122 (GTNGKTT). Residues Asn-157, 158-159 (TT), Ser-185, Gln-191, and Arg-193 each bind UDP-N-acetyl-alpha-D-muramoyl-L-alanyl-D-glutamate. At Lys-225 the chain carries N6-carboxylysine. Residues Arg-390, 414-417 (DNPR), Gly-465, and Glu-469 each bind meso-2,6-diaminopimelate. The Meso-diaminopimelate recognition motif motif lies at 414-417 (DNPR).

Belongs to the MurCDEF family. MurE subfamily. Requires Mg(2+) as cofactor. Post-translationally, carboxylation is probably crucial for Mg(2+) binding and, consequently, for the gamma-phosphate positioning of ATP.

The protein localises to the cytoplasm. The catalysed reaction is UDP-N-acetyl-alpha-D-muramoyl-L-alanyl-D-glutamate + meso-2,6-diaminopimelate + ATP = UDP-N-acetyl-alpha-D-muramoyl-L-alanyl-gamma-D-glutamyl-meso-2,6-diaminopimelate + ADP + phosphate + H(+). The protein operates within cell wall biogenesis; peptidoglycan biosynthesis. In terms of biological role, catalyzes the addition of meso-diaminopimelic acid to the nucleotide precursor UDP-N-acetylmuramoyl-L-alanyl-D-glutamate (UMAG) in the biosynthesis of bacterial cell-wall peptidoglycan. The protein is UDP-N-acetylmuramoyl-L-alanyl-D-glutamate--2,6-diaminopimelate ligase of Shigella flexneri.